The chain runs to 704 residues: MARTTPIARYRNIGISAHIDAGKTTTTERILFYTGVNHKIGEVHDGAATMDWMEQEQERGITITSAATTAFWSGMAKQYEPHRVNIIDTPGHVDFTIEVERSMRVLDGAVMVYCAVGGVQPQSETVWRQANKYKVPRIAFVNKMDRMGANFLKVVGQIKSRLGANPVPLQLAIGAEEGFTGVVDLVKMKAINWNDADQGVTFEYEDIPADMQDLADEWHQNLIESAAEASEELMEKYLGGEELTEEEIKKALRQRVLNNEIILVTCGSAFKNKGVQAMLDAVVDYLPSPVDVPAINGILDDGKDTPAERHASDDEPFAALAFKIATDPFVGNLTFFRVYSGVVNSGDTVLNPVKSARERFGRIVQMHANKREEIKEVRAGDIAAAIGLKDVTTGDTLCDPDNVIILERMEFPEPVISIAVEPKTKADQEKMGLALGRLAKEDPSFRVWTDEESNQTIIAGMGELHLDIIVDRMKREFNVEANVGKPQVAYREAIRAKVTDIEGKHAKQSGGRGQYGHVVIDMYPLEPGSNPKGYEFINDIKGGVIPGEYIPAVDKGIQEQLKAGPLAGYPVVDLGVRLHFGSFHDVDSSELAFKLAASIAFKDGFKKAKPVLLEPIMKVEVETPEENTGDVIGDLSRRRGMLRGQESNVTGVVIHAEVPLSEMFGYATQLRSLTKGRASYSMEFLKYDDAPNNVAQAVIEARGK.

Residues 8 to 290 (ARYRNIGISA…AVVDYLPSPV (283 aa)) enclose the tr-type G domain. GTP contacts are provided by residues 17 to 24 (AHIDAGKT), 88 to 92 (DTPGH), and 142 to 145 (NKMD).

This sequence belongs to the TRAFAC class translation factor GTPase superfamily. Classic translation factor GTPase family. EF-G/EF-2 subfamily.

It localises to the cytoplasm. Functionally, catalyzes the GTP-dependent ribosomal translocation step during translation elongation. During this step, the ribosome changes from the pre-translocational (PRE) to the post-translocational (POST) state as the newly formed A-site-bound peptidyl-tRNA and P-site-bound deacylated tRNA move to the P and E sites, respectively. Catalyzes the coordinated movement of the two tRNA molecules, the mRNA and conformational changes in the ribosome. This is Elongation factor G from Pectobacterium carotovorum subsp. carotovorum (strain PC1).